Here is a 22-residue protein sequence, read N- to C-terminus: Cysteine-rich venom protein collettin-a (22 aa).

Over residues 1 to 15 (SNKKNYQKEIVDKHN) the composition is skewed to basic and acidic residues. Positions 1–22 (SNKKNYQKEIVDKHNALRRSVK) are disordered.

This sequence belongs to the CRISP family. Contains 8 disulfide bonds. As to expression, expressed by the venom gland.

The protein resides in the secreted. This Pseudechis colletti (Collett's snake) protein is Cysteine-rich venom protein collettin-a.